Reading from the N-terminus, the 185-residue chain is MANQIIDQAKVNMGKTEESLQRELGNIRAGRANASLLNQITVEYYGAPTPLNQMAAITIPEPRVLQVSPYDKSSLKNIETALNASDLGINPANDGDVIRLVIPQLTGERRKEIAKEVGKYSESAKIAIRNIRREGLDKLKRQEKDGDITEDDLHRLEKDMQKATDDATKRIDEIAAAKEKEITEV.

This sequence belongs to the RRF family.

The protein localises to the cytoplasm. Its function is as follows. Responsible for the release of ribosomes from messenger RNA at the termination of protein biosynthesis. May increase the efficiency of translation by recycling ribosomes from one round of translation to another. This is Ribosome-recycling factor from Lacticaseibacillus casei (strain BL23) (Lactobacillus casei).